The primary structure comprises 35 residues: TCSNKGQQCGDDSDCCWHLCCVNNKCAHLILLCNL.

4 disulfide bridges follow: cysteine 2-cysteine 16, cysteine 9-cysteine 21, cysteine 15-cysteine 26, and cysteine 20-cysteine 33.

Belongs to the conotoxin I1 superfamily. As to expression, expressed by the venom duct.

It is found in the secreted. The protein is Conotoxin M11.2 of Conus magus (Magical cone).